The chain runs to 440 residues: C4-dicarboxylate TRAP transporter large permease protein DctM (440 aa).

13 consecutive transmembrane segments (helical) span residues L4 to L24, F54 to V74, W89 to G109, P112 to P132, I148 to V168, V181 to F201, A230 to T250, A255 to L275, M291 to I311, W318 to L338, I349 to V369, H370 to L390, and V410 to I430.

It belongs to the TRAP transporter large permease family. In terms of assembly, the complex comprises the extracytoplasmic solute receptor protein DctP, and the two transmembrane proteins DctQ and DctM.

It localises to the cell inner membrane. Part of the tripartite ATP-independent periplasmic (TRAP) transport system DctPQM involved in C4-dicarboxylates uptake. The protein is C4-dicarboxylate TRAP transporter large permease protein DctM of Rhodobacter capsulatus (Rhodopseudomonas capsulata).